We begin with the raw amino-acid sequence, 613 residues long: Chaperone protein DnaK (613 aa).

Positions 579-613 are disordered; it reads MYQSASSTTQTGSGNQNSSKQENDKTVDAEYKEKS. The span at 581–597 shows a compositional bias: low complexity; that stretch reads QSASSTTQTGSGNQNSS. Positions 599-613 are enriched in basic and acidic residues; that stretch reads QENDKTVDAEYKEKS.

Belongs to the heat shock protein 70 family.

Acts as a chaperone. This chain is Chaperone protein DnaK, found in Thermoplasma volcanium (strain ATCC 51530 / DSM 4299 / JCM 9571 / NBRC 15438 / GSS1).